A 181-amino-acid polypeptide reads, in one-letter code: uncharacterized protein (181 aa).

The protein belongs to the isochorismatase family.

This is an uncharacterized protein from Bacillus subtilis (strain 168).